A 352-amino-acid chain; its full sequence is Chorismate synthase (352 aa).

R48 provides a ligand contact to NADP(+). Residues R125–S127, N237–A238, G278, K293–S297, and R319 each bind FMN.

Belongs to the chorismate synthase family. As to quaternary structure, homotetramer. The cofactor is FMNH2.

The enzyme catalyses 5-O-(1-carboxyvinyl)-3-phosphoshikimate = chorismate + phosphate. The protein operates within metabolic intermediate biosynthesis; chorismate biosynthesis; chorismate from D-erythrose 4-phosphate and phosphoenolpyruvate: step 7/7. Its function is as follows. Catalyzes the anti-1,4-elimination of the C-3 phosphate and the C-6 proR hydrogen from 5-enolpyruvylshikimate-3-phosphate (EPSP) to yield chorismate, which is the branch point compound that serves as the starting substrate for the three terminal pathways of aromatic amino acid biosynthesis. This reaction introduces a second double bond into the aromatic ring system. The protein is Chorismate synthase of Francisella tularensis subsp. mediasiatica (strain FSC147).